A 195-amino-acid polypeptide reads, in one-letter code: Dynactin subunit 6 (195 aa).

The protein belongs to the dynactin subunits 5/6 family. Dynactin subunit 6 subfamily. In terms of assembly, member of the pointed-end complex of the dynactin shoulder complex which contains dctn4, dctn5 and dctn6 subunits and Actr10. Within the complex dctn6 forms a heterodimer with dctn5. Interacts with plk1.

Its subcellular location is the cytoplasm. The protein localises to the cytoskeleton. It localises to the chromosome. It is found in the centromere. The protein resides in the kinetochore. In terms of biological role, part of the dynactin complex that activates the molecular motor dynein for ultra-processive transport along microtubules. This is Dynactin subunit 6 (dctn6) from Danio rerio (Zebrafish).